We begin with the raw amino-acid sequence, 162 residues long: MDQTQYILNKKLVEFLLYSNQDCSLIVIDALITIGANVNYIDETNYNDTPILSVITKTSESNPETVKLLLDKGADVNYQNKYHETALMRTIKYGNFGIAKILLDYGANPYLLDYKNRNSIMIAKEFNVIPMLNIINLYDKKNKDNSDKIRLEIDRIVNIFVD.

ANK repeat units follow at residues Lys-10 to Tyr-40, Asn-47 to Tyr-78, and Tyr-82 to Leu-111.

This chain is Putative ankyrin repeat protein R664, found in Acanthamoeba polyphaga mimivirus (APMV).